A 357-amino-acid chain; its full sequence is F-box only protein 25 (357 aa).

The tract at residues 1–83 (MPFLGQDWRS…DTAAHSFYRE (83 aa)) is interaction with beta-actin. The F-box domain maps to 224–271 (GLTLSDLPLHMLNNILYRFSDGWDIVTLGQVTPTLYMLSEDRRLWKRL).

Part of a SCF (SKP1-cullin-F-box) protein ligase complex consisting of FBXO25, SKP1, CUL1 and RBX1. Interacts directly with SKP1 and CUL1. Interacts (via C-terminus) with actin (via N-terminus).

The protein resides in the nucleus. It functions in the pathway protein modification; protein ubiquitination. Substrate-recognition component of the SCF (SKP1-CUL1-F-box protein)-type E3 ubiquitin ligase complex. May play a role in accumulation of expanded polyglutamine (polyQ) protein huntingtin (HTT). This is F-box only protein 25 (Fbxo25) from Rattus norvegicus (Rat).